The sequence spans 380 residues: Apelin receptor (380 aa).

Topologically, residues methionine 1–leucine 30 are extracellular. The N-linked (GlcNAc...) asparagine glycan is linked to asparagine 15. Cystine bridges form between cysteine 19–cysteine 281 and cysteine 102–cysteine 181. The helical transmembrane segment at isoleucine 31–phenylalanine 54 threads the bilayer. Topologically, residues arginine 55–alanine 64 are cytoplasmic. Residues aspartate 65–alanine 86 form a helical membrane-spanning segment. The Extracellular segment spans residues threonine 87 to threonine 99. A helical membrane pass occupies residues phenylalanine 100–phenylalanine 125. The Cytoplasmic segment spans residues aspartate 126–glycine 146. The helical transmembrane segment at alanine 147–valine 164 threads the bilayer. At methionine 165 to glutamate 198 the chain is on the extracellular side. A glycan (N-linked (GlcNAc...) asparagine) is linked at asparagine 175. A helical transmembrane segment spans residues valine 199–phenylalanine 223. Residues isoleucine 224 to leucine 246 lie on the Cytoplasmic side of the membrane. Residues leucine 247–leucine 270 traverse the membrane as a helical segment. The Extracellular segment spans residues tyrosine 271–asparagine 289. A helical membrane pass occupies residues valine 290 to phenylalanine 312. Over aspartate 313–aspartate 380 the chain is Cytoplasmic. A compositionally biased stretch (low complexity) spans lysine 342–serine 351. The segment at lysine 342–aspartate 380 is disordered. Over residues proline 371–aspartate 380 the composition is skewed to polar residues.

This sequence belongs to the G-protein coupled receptor 1 family. As to quaternary structure, homodimer; dimerization inhibits APLNR-mediated G protein and beta-arrestin signaling pathways compared to monomeric APLNR.

It is found in the cell membrane. Its function is as follows. G protein-coupled receptor for peptide hormones apelin (APLN) and apelin receptor early endogenous ligand (APELA/ELA), that plays a role in the regulation of normal cardiovascular function and fluid homeostasis. When acting as apelin receptor, activates both G(i) protein pathway that inhibits adenylate cyclase activity, and the beta-arrestin pathway that promotes internalization of the receptor. APLNR/APJ also functions as mechanoreceptor that is activated by pathological stimuli in a G-protein-independent fashion to induce beta-arrestin signaling, hence eliciting cardiac hypertrophy. However, the presence of apelin ligand blunts cardiac hypertrophic induction from APLNR/APJ on response to pathological stimuli. Plays a key role in early development such as gastrulation, blood vessels formation and heart morphogenesis by acting as a APELA receptor. May promote angioblast migration toward the embryonic midline, i.e. the position of the future vessel formation, during vasculogenesis. Promotes sinus venosus (SV)-derived endothelial cells migration into the developing heart to promote coronary blood vessel development. Also plays a role in various processes in adults such as regulation of blood vessel formation, blood pressure, heart contractility and heart failure. In terms of biological role, (Microbial infection) Alternative coreceptor with CD4 for HIV-1 infection; may be involved in the development of AIDS dementia. This Macaca mulatta (Rhesus macaque) protein is Apelin receptor (APLNR).